The sequence spans 341 residues: Anthranilate phosphoribosyltransferase (341 aa).

Residues Gly81, Gly84 to Asp85, Asn91 to Thr94, Lys109 to Ser117, and Ser121 each bind 5-phospho-alpha-D-ribose 1-diphosphate. Gly81 is an anthranilate binding site. A Mg(2+)-binding site is contributed by Ser93. Asn112 lines the anthranilate pocket. Position 167 (Arg167) interacts with anthranilate. Residues Asp226 and Glu227 each contribute to the Mg(2+) site.

This sequence belongs to the anthranilate phosphoribosyltransferase family. Homodimer. It depends on Mg(2+) as a cofactor.

It carries out the reaction N-(5-phospho-beta-D-ribosyl)anthranilate + diphosphate = 5-phospho-alpha-D-ribose 1-diphosphate + anthranilate. It participates in amino-acid biosynthesis; L-tryptophan biosynthesis; L-tryptophan from chorismate: step 2/5. In terms of biological role, catalyzes the transfer of the phosphoribosyl group of 5-phosphorylribose-1-pyrophosphate (PRPP) to anthranilate to yield N-(5'-phosphoribosyl)-anthranilate (PRA). In Teredinibacter turnerae (strain ATCC 39867 / T7901), this protein is Anthranilate phosphoribosyltransferase.